The chain runs to 239 residues: Biosynthetic peptidoglycan transglycosylase (239 aa).

The helical transmembrane segment at 29 to 49 (GMFGLGALMLVWIVAYAVVPV) threads the bilayer.

Belongs to the glycosyltransferase 51 family.

It is found in the cell inner membrane. The catalysed reaction is [GlcNAc-(1-&gt;4)-Mur2Ac(oyl-L-Ala-gamma-D-Glu-L-Lys-D-Ala-D-Ala)](n)-di-trans,octa-cis-undecaprenyl diphosphate + beta-D-GlcNAc-(1-&gt;4)-Mur2Ac(oyl-L-Ala-gamma-D-Glu-L-Lys-D-Ala-D-Ala)-di-trans,octa-cis-undecaprenyl diphosphate = [GlcNAc-(1-&gt;4)-Mur2Ac(oyl-L-Ala-gamma-D-Glu-L-Lys-D-Ala-D-Ala)](n+1)-di-trans,octa-cis-undecaprenyl diphosphate + di-trans,octa-cis-undecaprenyl diphosphate + H(+). It functions in the pathway cell wall biogenesis; peptidoglycan biosynthesis. In terms of biological role, peptidoglycan polymerase that catalyzes glycan chain elongation from lipid-linked precursors. The sequence is that of Biosynthetic peptidoglycan transglycosylase from Jannaschia sp. (strain CCS1).